The primary structure comprises 383 residues: tRNA-specific 2-thiouridylase MnmA (383 aa).

Residues 9–16 (GMSGGVDS) and Met-35 contribute to the ATP site. Residues 95–97 (NPD) form an interaction with target base in tRNA region. Cys-100 (nucleophile) is an active-site residue. Cysteines 100 and 196 form a disulfide. ATP is bound at residue Gly-124. The interaction with tRNA stretch occupies residues 146–148 (KDQ). Cys-196 functions as the Cysteine persulfide intermediate in the catalytic mechanism. Residues 308 to 309 (RY) form an interaction with tRNA region.

This sequence belongs to the MnmA/TRMU family.

It localises to the cytoplasm. It carries out the reaction S-sulfanyl-L-cysteinyl-[protein] + uridine(34) in tRNA + AH2 + ATP = 2-thiouridine(34) in tRNA + L-cysteinyl-[protein] + A + AMP + diphosphate + H(+). In terms of biological role, catalyzes the 2-thiolation of uridine at the wobble position (U34) of tRNA, leading to the formation of s(2)U34. The sequence is that of tRNA-specific 2-thiouridylase MnmA from Burkholderia pseudomallei (strain 668).